A 293-amino-acid polypeptide reads, in one-letter code: MASNVTNKMDPHSMNSRVFIGNLNTLVVKKSDVEAIFSKYGKIAGCSVHKGFAFVQYDKEKNARAAVAGEDGRMIASQVVDINLAAEPKVNRGNAGVKRSAAEMYGSSFDLDYNLQRDYYGGMYSFPARVPPPPPIALAVVPSKRQRISGNTSRRGKSGFNSKSGKRGSSKSGKLKGDDLQAIKQELTQIKQKVDSLLENLEKIEKEHCKQGVEVKNAKSEEEQTSSSSKKDKTHVKMESEGGADDSVEEGDLLCDDDNEDQGDNQLELIKDDEKGAEEGEDDRDRANGQDDS.

The 72-residue stretch at 16 to 87 folds into the RRM domain; sequence SRVFIGNLNT…QVVDINLAAE (72 aa). Disordered regions lie at residues 140–177 and 208–293; these read VVPS…KLKG and HCKQ…QDDS. Positions 177-208 form a coiled coil; the sequence is GDDLQAIKQELTQIKQKVDSLLENLEKIEKEH. Basic and acidic residues-rich tracts occupy residues 208-222 and 229-240; these read HCKQ…KSEE and SKKDKTHVKMES. The segment covering 242–263 has biased composition (acidic residues); sequence GGADDSVEEGDLLCDDDNEDQG. Residues 269-293 show a composition bias toward basic and acidic residues; that stretch reads LIKDDEKGAEEGEDDRDRANGQDDS.

The protein belongs to the RRM HNRPC family. RALY subfamily.

It localises to the nucleus. This chain is Heterogeneous nuclear ribonucleoprotein C-like 4, found in Homo sapiens (Human).